A 117-amino-acid chain; its full sequence is MARVKRGVIARARHKKVLKAAKGYYGARSRVYRVAFQAVIKAGQYAYRDRRQRKRQFRQLWIARINAAARQNGLSYSKFINGLKKVSVEIDRKILADIAVFDKVAFAALVEKAKSAL.

The protein belongs to the bacterial ribosomal protein bL20 family.

Binds directly to 23S ribosomal RNA and is necessary for the in vitro assembly process of the 50S ribosomal subunit. It is not involved in the protein synthesizing functions of that subunit. The chain is Large ribosomal subunit protein bL20 from Actinobacillus pleuropneumoniae serotype 7 (strain AP76).